The sequence spans 508 residues: UDP-N-acetylmuramyl-tripeptide synthetase (508 aa).

Position 35 (serine 35) interacts with UDP-N-acetyl-alpha-D-muramoyl-L-alanyl-D-glutamate. 118 to 124 (GTDGKSS) lines the ATP pocket. Residues 163 to 164 (ST), threonine 190, and arginine 200 each bind UDP-N-acetyl-alpha-D-muramoyl-L-alanyl-D-glutamate. N6-carboxylysine is present on lysine 232.

It belongs to the MurCDEF family. MurE subfamily. Carboxylation is probably crucial for Mg(2+) binding and, consequently, for the gamma-phosphate positioning of ATP.

It is found in the cytoplasm. Its pathway is cell wall biogenesis; peptidoglycan biosynthesis. Functionally, catalyzes the addition of an amino acid to the nucleotide precursor UDP-N-acetylmuramoyl-L-alanyl-D-glutamate (UMAG) in the biosynthesis of bacterial cell-wall peptidoglycan. The protein is UDP-N-acetylmuramyl-tripeptide synthetase of Borreliella burgdorferi (strain ATCC 35210 / DSM 4680 / CIP 102532 / B31) (Borrelia burgdorferi).